We begin with the raw amino-acid sequence, 123 residues long: Large ribosomal subunit protein bL12 (123 aa).

Belongs to the bacterial ribosomal protein bL12 family. As to quaternary structure, homodimer. Part of the ribosomal stalk of the 50S ribosomal subunit. Forms a multimeric L10(L12)X complex, where L10 forms an elongated spine to which 2 to 4 L12 dimers bind in a sequential fashion. Binds GTP-bound translation factors.

Functionally, forms part of the ribosomal stalk which helps the ribosome interact with GTP-bound translation factors. Is thus essential for accurate translation. The protein is Large ribosomal subunit protein bL12 of Burkholderia vietnamiensis (strain G4 / LMG 22486) (Burkholderia cepacia (strain R1808)).